The following is a 517-amino-acid chain: Crotonobetaine/carnitine--CoA ligase (517 aa).

Belongs to the ATP-dependent AMP-binding enzyme family.

The enzyme catalyses 4-(trimethylamino)butanoate + ATP + CoA = 4-(trimethylamino)butanoyl-CoA + AMP + diphosphate. It carries out the reaction crotonobetaine + ATP + CoA = crotonobetainyl-CoA + AMP + diphosphate. It catalyses the reaction (R)-carnitine + ATP + CoA = (R)-carnitinyl-CoA + AMP + diphosphate. Its pathway is amine and polyamine metabolism; carnitine metabolism. Catalyzes the transfer of CoA to carnitine, generating the initial carnitinyl-CoA needed for the CaiB reaction cycle. Also has activity toward crotonobetaine and gamma-butyrobetaine. The chain is Crotonobetaine/carnitine--CoA ligase from Escherichia coli O139:H28 (strain E24377A / ETEC).